Reading from the N-terminus, the 61-residue chain is Metallothionein-1 (61 aa).

Met-1 is modified (N-acetylmethionine). Residues 1 to 29 form a beta region; it reads MDPNCSCSTGGSCTCTSSCACKNCKCTSC. A divalent metal cation is bound by residues Cys-5, Cys-7, Cys-13, Cys-15, Cys-19, Cys-21, Cys-24, Cys-26, Cys-29, Cys-33, Cys-34, Cys-36, Cys-37, Cys-41, Cys-44, Cys-48, Cys-50, Cys-57, Cys-59, and Cys-60. The segment at 30–61 is alpha; sequence KKSCCSCCPVGCSKCAQGCVCKGAADKCTCCA.

This sequence belongs to the metallothionein superfamily. Type 1 family.

Functionally, metallothioneins have a high content of cysteine residues that bind various heavy metals; these proteins are transcriptionally regulated by both heavy metals and glucocorticoids. In Mus musculus (Mouse), this protein is Metallothionein-1 (Mt1).